Here is a 204-residue protein sequence, read N- to C-terminus: Tat proofreading chaperone DmsD (204 aa).

It belongs to the TorD/DmsD family. DmsD subfamily.

Its function is as follows. Required for biogenesis/assembly of DMSO reductase, but not for the interaction of the DmsA signal peptide with the Tat system. May be part of a chaperone cascade complex that facilitates a folding-maturation pathway for the substrate protein. The protein is Tat proofreading chaperone DmsD of Salmonella typhi.